Consider the following 445-residue polypeptide: Oxysterols receptor LXR-alpha (445 aa).

Disordered regions lie at residues 1–34 and 63–86; these read MSLWLEASMPDVSPDSATELWKTEPQDAGDQGGN and ALLPRAETLPEPTELRPQKRKKGP. The segment at 1–94 is transactivation AF-1; required for ligand-independent transactivation function; that stretch reads MSLWLEASMP…GPAPKMLGNE (94 aa). Positions 93–168 form a DNA-binding region, nuclear receptor; sequence NELCSVCGDK…AGMREECVLS (76 aa). 2 consecutive NR C4-type zinc fingers follow at residues 96–116 and 132–156; these read CSVCGDKASGFHYNVLSCEGC and CHSGGHCPMDTYMRRKCQECRLRKC. Phosphoserine is present on Ser191. The interval 203–445 is transactivation AF-2; required for ligand-dependent transactivation function; mediates interaction with CCAR2; that stretch reads QLSPEQLGMI…LLSEIWDVHE (243 aa). One can recognise an NR LBD domain in the interval 207 to 445; that stretch reads EQLGMIEKLV…LLSEIWDVHE (239 aa).

The protein belongs to the nuclear hormone receptor family. NR1 subfamily. Heterodimer of NR1H3 and RXR (retinoic acid receptor). Interacts with CCAR2 (via N-terminus) in a ligand-independent manner. Interacts with SIRT1 and this interaction is inhibited by CCAR2. Post-translationally, ubiquitinated. Ubiquitination by UBR5 leads to its degradation: UBR5 specifically recognizes and binds ligand-bound NR1H3 when it is not associated with coactivators (NCOAs). In presence of NCOAs, the UBR5-degron is not accessible, preventing its ubiquitination and degradation.

The protein resides in the nucleus. It localises to the cytoplasm. Functionally, nuclear receptor that exhibits a ligand-dependent transcriptional activation activity. Interaction with retinoic acid receptor (RXR) shifts RXR from its role as a silent DNA-binding partner to an active ligand-binding subunit in mediating retinoid responses through target genes defined by LXRES. LXRES are DR4-type response elements characterized by direct repeats of two similar hexanuclotide half-sites spaced by four nucleotides. Plays an important role in the regulation of cholesterol homeostasis, regulating cholesterol uptake through MYLIP-dependent ubiquitination of LDLR, VLDLR and LRP8. Interplays functionally with RORA for the regulation of genes involved in liver metabolism. Induces LPCAT3-dependent phospholipid remodeling in endoplasmic reticulum (ER) membranes of hepatocytes, driving SREBF1 processing and lipogenesis. Via LPCAT3, triggers the incorporation of arachidonate into phosphatidylcholines of ER membranes, increasing membrane dynamics and enabling triacylglycerols transfer to nascent very low-density lipoprotein (VLDL) particles. Via LPCAT3 also counteracts lipid-induced ER stress response and inflammation, likely by modulating SRC kinase membrane compartmentalization and limiting the synthesis of lipid inflammatory mediators. The protein is Oxysterols receptor LXR-alpha (Nr1h3) of Mus musculus (Mouse).